We begin with the raw amino-acid sequence, 71 residues long: Venom peptide 2-long (71 aa).

Positions Met1 to Ala24 are cleaved as a signal peptide. AXPX repeat units lie at residues Ala24–Ala27, Ala32–Gly35, Ala44–Glu47, Ala50–Glu53, and Ala54–Ile57. A propeptide spanning residues Val25–Ala54 is cleaved from the precursor. Leu68 bears the Leucine amide mark.

It belongs to the MCD family. Protonectin subfamily. In terms of tissue distribution, expressed by the venom gland.

It localises to the secreted. It is found in the target cell membrane. Functionally, antimicrobial peptide with strong activity against the fungus B.cinerea (MIC=0.5 ug/ml), and poor activities against the fungus C.albicans (MIC=100 ug/ml), the Gram-positive bacterium S.aureus (MIC=125 ug/ml) and the Gram-negative bacterium E.coli (MIC=125 ug/ml). Its function is as follows. Antimicrobial peptide with strong activity against the fungus B.cinerea (MIC=0.4 uM), and poor activities against the fungus C.albicans (MIC=16 uM), the Gram-positive bacterium S.aureus (MIC=20 uM) and the Gram-negative bacterium E.coli (MIC=79 uM). Shows cytolytic activity against insect cell lines. Has potent hemolytic activity against ovine erythrocytes. Has potent hemolytic activity against human erythrocytes (EC(50)=31 uM). In vivo, peptide injection in the vicinity of the head and thorax of lepidopteran larvae induces feeding disorder followed by death due to starvation. This is Venom peptide 2-long from Orancistrocerus drewseni (Solitary wasp).